Consider the following 155-residue polypeptide: Small ribosomal subunit protein uS7c (155 aa).

It belongs to the universal ribosomal protein uS7 family. Part of the 30S ribosomal subunit.

The protein localises to the plastid. Its subcellular location is the chloroplast. Functionally, one of the primary rRNA binding proteins, it binds directly to 16S rRNA where it nucleates assembly of the head domain of the 30S subunit. The protein is Small ribosomal subunit protein uS7c (rps7) of Silene latifolia (White campion).